Reading from the N-terminus, the 543-residue chain is Telomerase Cajal body protein 1 homolog (543 aa).

Residues 95-128 (GRPKNAVESPHAGVPMETSLAAEEEANGDEEEES) form a disordered region. Residues 116-127 (AEEEANGDEEEE) are compositionally biased toward acidic residues. WD repeat units lie at residues 237–283 (PEGG…LRCS), 291–329 (DEVM…RFCD), and 378–421 (GHKG…QPLV).

It belongs to the TCAB1 family.

The protein resides in the nucleus. The protein localises to the cajal body. RNA chaperone that plays a key role in Cajal body formation. Specifically recognizes and binds the Cajal body box (CAB box) present in both small Cajal body RNAs (scaRNAs). Probably acts by mediating localization of scaRNAs to Cajal bodies. This is Telomerase Cajal body protein 1 homolog from Drosophila melanogaster (Fruit fly).